Here is a 103-residue protein sequence, read N- to C-terminus: Nematocin (103 aa).

A signal peptide spans 1-19; the sequence is MGSSPILLVLAISIGLASA. A disulfide bridge links Cys20 with Cys25. Tyrosine amide is present on Tyr30. Residues 31-103 constitute a propeptide that is removed on maturation; that stretch reads GRTIRCSSCG…QGGCQTSAMC (73 aa).

It belongs to the vasopressin/oxytocin family. As to expression, detected in thermosensory AFD neurons, neurosecretory NSM cells, AVK interneurons, pharyngeal neuron M5, and the mechanosensory DVA neuron. Detected in male-specific CP motor neurons.

It is found in the secreted. In terms of biological role, ligand for the G-protein coupled receptor ntr-1. Plays a role in gustatory associative learning. Also plays a role in male mating behavior. The sequence is that of Nematocin from Caenorhabditis elegans.